A 520-amino-acid chain; its full sequence is Nonsense-mediated mRNA decay factor SMG9 (520 aa).

Disordered stretches follow at residues 1–94, 108–143, and 341–360; these read MSES…PAPL, KGPVAVTGASTPEGTAPPPPAAPAPPKGEKEGQRPT, and KPSTPSPSHESSSSSGSDEG. N-acetylserine is present on serine 2. Phosphoserine is present on residues serine 2, serine 4, serine 7, serine 32, and serine 53. A compositionally biased stretch (basic and acidic residues) spans 36-53; it reads GRERDYIAPWERERRDAS. Pro residues-rich tracts occupy residues 78–94 and 122–133; these read QPPPPTAPAAPPAPAPL and TAPPPPAAPAPP. Low complexity predominate over residues 342-357; it reads PSTPSPSHESSSSSGS. Serine 451 carries the post-translational modification Phosphoserine.

Belongs to the SMG9 family. In terms of assembly, self-associates to form homodimers and forms heterodimers with SMG8; these assembly forms may represent SMG1C intermediate forms. Component of the SMG1C complex composed of SMG1, SMG8 and SMG9. Interacts with DHX34; the interaction is RNA-independent. Post-translationally, phosphorylated by SMG1.

In terms of biological role, involved in nonsense-mediated decay (NMD) of mRNAs containing premature stop codons. Is recruited by release factors to stalled ribosomes together with SMG1 and SMG8 (forming the SMG1C protein kinase complex) and, in the SMG1C complex, is required for the efficient association between SMG1 and SMG8. Plays a role in brain, heart, and eye development. This is Nonsense-mediated mRNA decay factor SMG9 from Homo sapiens (Human).